The chain runs to 239 residues: MTWRATVLTLFPEMFPGPLGISLAGKALAARLWALDIRDIRNSATDRHRSVDDTPAGGGPGMVLRADVLARAIDAAETPPGAPLLLMSPRGRPLTQSRVAELAAGPGPLIVCGRFEGVDQRIIDARGLDEISIGDYVLSGGEIAAMALIDACVRLLPGVMGKAESGEDESFSHGLLEYPQYTRPQEFEGRVIPDILLSGDHAKVAGWRRAEAEALTQERRPDLWAARATQNPPERKTNG.

Residues Gly113 and Ile133 to Leu138 contribute to the S-adenosyl-L-methionine site. Positions Glu218–Gly239 are disordered.

It belongs to the RNA methyltransferase TrmD family. As to quaternary structure, homodimer.

It localises to the cytoplasm. It carries out the reaction guanosine(37) in tRNA + S-adenosyl-L-methionine = N(1)-methylguanosine(37) in tRNA + S-adenosyl-L-homocysteine + H(+). Its function is as follows. Specifically methylates guanosine-37 in various tRNAs. This Nitrobacter winogradskyi (strain ATCC 25391 / DSM 10237 / CIP 104748 / NCIMB 11846 / Nb-255) protein is tRNA (guanine-N(1)-)-methyltransferase.